Consider the following 447-residue polypeptide: Argininosuccinate synthase (447 aa).

ATP contacts are provided by residues 17–25 and A43; that span reads AFSGGLDTS. Y99 lines the L-citrulline pocket. 2 residues coordinate ATP: G129 and T131. L-aspartate contacts are provided by T131, N135, and D136. N135 provides a ligand contact to L-citrulline. Residue D136 coordinates ATP. L-citrulline is bound by residues R139 and S192. D194 serves as a coordination point for ATP. L-citrulline-binding residues include T201, E203, and E280.

The protein belongs to the argininosuccinate synthase family. Type 2 subfamily. As to quaternary structure, homotetramer.

It localises to the cytoplasm. The enzyme catalyses L-citrulline + L-aspartate + ATP = 2-(N(omega)-L-arginino)succinate + AMP + diphosphate + H(+). Its pathway is amino-acid biosynthesis; L-arginine biosynthesis; L-arginine from L-ornithine and carbamoyl phosphate: step 2/3. The protein is Argininosuccinate synthase of Escherichia coli O9:H4 (strain HS).